The chain runs to 138 residues: ATP synthase epsilon chain (138 aa).

This sequence belongs to the ATPase epsilon chain family. In terms of assembly, F-type ATPases have 2 components, CF(1) - the catalytic core - and CF(0) - the membrane proton channel. CF(1) has five subunits: alpha(3), beta(3), gamma(1), delta(1), epsilon(1). CF(0) has three main subunits: a, b and c.

It localises to the cell inner membrane. Produces ATP from ADP in the presence of a proton gradient across the membrane. The sequence is that of ATP synthase epsilon chain from Bartonella quintana (strain Toulouse) (Rochalimaea quintana).